The chain runs to 91 residues: MPRSLKKGPFIDAHLFAKVETALETNSRKPIKTWSRRSMILPQMVGLTLSVHNGRTHVPVIVSEQMVGHKLGEFAPTRTYRGHGIDKKAKR.

It belongs to the universal ribosomal protein uS19 family.

Protein S19 forms a complex with S13 that binds strongly to the 16S ribosomal RNA. This chain is Small ribosomal subunit protein uS19, found in Psychrobacter arcticus (strain DSM 17307 / VKM B-2377 / 273-4).